The following is a 215-amino-acid chain: Ependymin (215 aa).

Residues 1-20 (MHTVKLLCVVFSCLCAVAWA) form the signal peptide. N-linked (GlcNAc...) asparagine glycosylation is found at Asn-71 and Asn-94.

It belongs to the ependymin family. In terms of assembly, forms disulfide-linked dimers. Binds calcium through the terminal sialic acids. EPDs are synthesized in the meninx and secreted in the cerebrospinal fluid.

The protein localises to the secreted. Its function is as follows. May play a role in neural plasticity. May be involved during axon regeneration. This is Ependymin (epd) from Cyprinus carpio (Common carp).